The following is a 255-amino-acid chain: tRNA pseudouridine synthase A (255 aa).

The active-site Nucleophile is Asp52. A substrate-binding site is contributed by Tyr111.

Belongs to the tRNA pseudouridine synthase TruA family. Homodimer.

The enzyme catalyses uridine(38/39/40) in tRNA = pseudouridine(38/39/40) in tRNA. Its function is as follows. Formation of pseudouridine at positions 38, 39 and 40 in the anticodon stem and loop of transfer RNAs. The polypeptide is tRNA pseudouridine synthase A (Cereibacter sphaeroides (strain KD131 / KCTC 12085) (Rhodobacter sphaeroides)).